Here is a 387-residue protein sequence, read N- to C-terminus: Phosphoglycerate kinase (387 aa).

Substrate is bound by residues aspartate 21–asparagine 23, arginine 36, histidine 59–arginine 62, arginine 113, and arginine 146. ATP contacts are provided by residues lysine 197, glutamate 314, and glycine 340–threonine 343.

The protein belongs to the phosphoglycerate kinase family. Monomer.

The protein resides in the cytoplasm. The catalysed reaction is (2R)-3-phosphoglycerate + ATP = (2R)-3-phospho-glyceroyl phosphate + ADP. It functions in the pathway carbohydrate degradation; glycolysis; pyruvate from D-glyceraldehyde 3-phosphate: step 2/5. In Pectobacterium atrosepticum (strain SCRI 1043 / ATCC BAA-672) (Erwinia carotovora subsp. atroseptica), this protein is Phosphoglycerate kinase.